A 146-amino-acid polypeptide reads, in one-letter code: Large ribosomal subunit protein uL15 (146 aa).

The segment covering 1-18 (MKLHELKPSEGSRKERNR) has biased composition (basic and acidic residues). The tract at residues 1 to 50 (MKLHELKPSEGSRKERNRVGRGTGSGNGKTSGRGHKGQKARSGGGVRLGF) is disordered. Residues 21–31 (RGTGSGNGKTS) are compositionally biased toward gly residues.

It belongs to the universal ribosomal protein uL15 family. In terms of assembly, part of the 50S ribosomal subunit.

In terms of biological role, binds to the 23S rRNA. The sequence is that of Large ribosomal subunit protein uL15 from Listeria welshimeri serovar 6b (strain ATCC 35897 / DSM 20650 / CCUG 15529 / CIP 8149 / NCTC 11857 / SLCC 5334 / V8).